The chain runs to 135 residues: Aspartate 1-decarboxylase (135 aa).

Catalysis depends on Ser-25, which acts as the Schiff-base intermediate with substrate; via pyruvic acid. A Pyruvic acid (Ser) modification is found at Ser-25. Thr-57 lines the substrate pocket. The Proton donor role is filled by Tyr-58. Position 73–75 (73–75 (GAA)) interacts with substrate.

The protein belongs to the PanD family. Heterooctamer of four alpha and four beta subunits. Requires pyruvate as cofactor. Is synthesized initially as an inactive proenzyme, which is activated by self-cleavage at a specific serine bond to produce a beta-subunit with a hydroxyl group at its C-terminus and an alpha-subunit with a pyruvoyl group at its N-terminus.

The protein resides in the cytoplasm. It carries out the reaction L-aspartate + H(+) = beta-alanine + CO2. The protein operates within cofactor biosynthesis; (R)-pantothenate biosynthesis; beta-alanine from L-aspartate: step 1/1. Functionally, catalyzes the pyruvoyl-dependent decarboxylation of aspartate to produce beta-alanine. This chain is Aspartate 1-decarboxylase, found in Mycolicibacterium vanbaalenii (strain DSM 7251 / JCM 13017 / BCRC 16820 / KCTC 9966 / NRRL B-24157 / PYR-1) (Mycobacterium vanbaalenii).